The sequence spans 336 residues: Palmitoyltransferase PFA3 (336 aa).

Residues 1 to 6 (MNDRLS) lie on the Cytoplasmic side of the membrane. Residues 7-29 (LTSLFPRCLTTCLYIWTAYITLT) form a helical membrane-spanning segment. Residues 30 to 37 (RIHQIPRW) lie on the Vacuolar side of the membrane. A helical membrane pass occupies residues 38–58 (FLALTIVPTLAVALYTYYKVI). The Cytoplasmic segment spans residues 59–147 (ARGPGSPLDF…AECTGFRNQK (89 aa)). The region spanning 104–154 (RVCQVCHVWKPDRCHHCSSCDVCILKMDHHCPWFAECTGFRNQKFFIQFLM) is the DHHC domain. Residues 148–168 (FFIQFLMYTTLYAFLVLIYTC) form a helical membrane-spanning segment. Topologically, residues 169–188 (YELGTWFNSGSFNRELIDFH) are vacuolar. Residues 189-209 (LLGVALLAVAVFISVLAFTCF) traverse the membrane as a helical segment. Residues 210–336 (SIYQVCKNQT…RASVEIIDAN (127 aa)) lie on the Cytoplasmic side of the membrane.

Belongs to the DHHC palmitoyltransferase family. PFA3 subfamily. Post-translationally, autopalmitoylated.

Its subcellular location is the vacuole membrane. The enzyme catalyses L-cysteinyl-[protein] + hexadecanoyl-CoA = S-hexadecanoyl-L-cysteinyl-[protein] + CoA. Its function is as follows. Palmitoyltransferase specific for VAC8. Palmitoylates VAC8 at one or more of its N-terminal cysteine residues, which is required for its proper membrane localization. In Saccharomyces cerevisiae (strain ATCC 204508 / S288c) (Baker's yeast), this protein is Palmitoyltransferase PFA3 (PFA3).